We begin with the raw amino-acid sequence, 708 residues long: Elongation factor G 1 (708 aa).

The region spanning 9–295 (AKVRNIGIMA…AVVRYLPTPL (287 aa)) is the tr-type G domain. Residues 18–25 (AHIDAGKT), 86–90 (DTPGH), and 140–143 (NKLD) each bind GTP.

The protein belongs to the TRAFAC class translation factor GTPase superfamily. Classic translation factor GTPase family. EF-G/EF-2 subfamily.

Its subcellular location is the cytoplasm. In terms of biological role, catalyzes the GTP-dependent ribosomal translocation step during translation elongation. During this step, the ribosome changes from the pre-translocational (PRE) to the post-translocational (POST) state as the newly formed A-site-bound peptidyl-tRNA and P-site-bound deacylated tRNA move to the P and E sites, respectively. Catalyzes the coordinated movement of the two tRNA molecules, the mRNA and conformational changes in the ribosome. This chain is Elongation factor G 1 (fusA), found in Streptomyces coelicolor (strain ATCC BAA-471 / A3(2) / M145).